The following is an 86-amino-acid chain: U22-theraphotoxin-Cg1a (86 aa).

The signal sequence occupies residues 1–20 (MKVSVVLAITVLALLSVAYA). A propeptide spanning residues 21–51 (SEFEEKELVKEVVRTIFLGKEDAALREETDR) is cleaved from the precursor. 3 disulfides stabilise this stretch: Cys53–Cys67, Cys60–Cys72, and Cys66–Cys79. Position 85 is a phenylalanine amide (Phe85).

Belongs to the neurotoxin 10 (Hwtx-1) family. 42 (Jztx-44) subfamily. As to expression, expressed by the venom gland.

It is found in the secreted. Functionally, probable ion channel inhibitor. The protein is U22-theraphotoxin-Cg1a of Chilobrachys guangxiensis (Chinese earth tiger tarantula).